The sequence spans 299 residues: Ethylmalonyl-CoA decarboxylase (299 aa).

The protein belongs to the enoyl-CoA hydratase/isomerase family.

It localises to the cytoplasm. The protein localises to the cytosol. The enzyme catalyses (2S)-ethylmalonyl-CoA + H(+) = butanoyl-CoA + CO2. It catalyses the reaction (S)-methylmalonyl-CoA + H(+) = propanoyl-CoA + CO2. The catalysed reaction is (2R)-ethylmalonyl-CoA + H(+) = butanoyl-CoA + CO2. In terms of biological role, decarboxylates ethylmalonyl-CoA, a potentially toxic metabolite, to form butyryl-CoA, suggesting it might be involved in metabolite proofreading. Acts preferentially on (S)-ethylmalonyl-CoA but also has some activity on the (R)-isomer. Also has methylmalonyl-CoA decarboxylase activity at lower level. The protein is Ethylmalonyl-CoA decarboxylase (echdc1) of Xenopus laevis (African clawed frog).